The primary structure comprises 116 residues: NADH-ubiquinone oxidoreductase chain 3 (116 aa).

Transmembrane regions (helical) follow at residues 8–28, 56–76, and 88–108; these read VVATALVSLILAFIAFWLPSL, FFLIAILFLLFDLEIALLLPL, and TLLWTTTILVLLTLGLIYEWF.

It belongs to the complex I subunit 3 family.

It is found in the mitochondrion membrane. The catalysed reaction is a ubiquinone + NADH + 5 H(+)(in) = a ubiquinol + NAD(+) + 4 H(+)(out). Its function is as follows. Core subunit of the mitochondrial membrane respiratory chain NADH dehydrogenase (Complex I) that is believed to belong to the minimal assembly required for catalysis. Complex I functions in the transfer of electrons from NADH to the respiratory chain. The immediate electron acceptor for the enzyme is believed to be ubiquinone. This Scyliorhinus canicula (Small-spotted catshark) protein is NADH-ubiquinone oxidoreductase chain 3 (MT-ND3).